A 213-amino-acid chain; its full sequence is Transcription antitermination protein NusB (213 aa).

It belongs to the NusB family.

Functionally, involved in transcription antitermination. Required for transcription of ribosomal RNA (rRNA) genes. Binds specifically to the boxA antiterminator sequence of the ribosomal RNA (rrn) operons. This chain is Transcription antitermination protein NusB, found in Nostoc punctiforme (strain ATCC 29133 / PCC 73102).